A 778-amino-acid polypeptide reads, in one-letter code: MSSGAKEGGGGSPAYHLPHPHPHPPQHAQYVGPYRLEKTLGKGQTGLVKLGVHCITGQKVAIKIVNREKLSESVLMKVEREIAILKLIEHPHVLKLHDVYENKKYLYLVLEHVSGGELFDYLVKKGRLTPKEARKFFRQIVSALDFCHSYSICHRDLKPENLLLDEKNNIRIADFGMASLQVGDSLLETSCGSPHYACPEVIKGEKYDGRRADMWSCGVILFALLVGALPFDDDNLRQLLEKVKRGVFHMPHFIPPDCQSLLRGMIEVEPEKRLSLEQIQKHPWYLGGKHEPDPCLEPAPGRRVAMRSLPSNGELDPDVLESMASLGCFRDRERLHRELRSEEENQEKMIYYLLLDRKERYPSCEDQDLPPRNDVDPPRKRVDSPMLSRHGKRRPERKSMEVLSITDAGGGGSPVPTRRALEMAQHSQRSRSVSGASTGLSSSPLSSPRSPVFSFSPEPGAGDEARGGGSPTSKTQTLPSRGPRGGGAGEQPPPPSARSTPLPGPPGSPRSSGGTPLHSPLHTPRASPTGTPGTTPPPSPGGGVGGAAWRSRLNSIRNSFLGSPRFHRRKMQVPTAEEMSSLTPESSPELAKRSWFGNFISLDKEEQIFLVLKDKPLSSIKADIVHAFLSIPSLSHSVLSQTSFRAEYKASGGPSVFQKPVRFQVDISSSEGPEPSPRRDGSGGGGIYSVTFTLISGPSRRFKRVVETIQAQLLSTHDQPSVQALADEKNGAQTRPAGAPPRSLQPPPGRPDPELSSSPRRGPPKDKKLLATNGTPLP.

The span at 1–12 (MSSGAKEGGGGS) shows a compositional bias: gly residues. The disordered stretch occupies residues 1–29 (MSSGAKEGGGGSPAYHLPHPHPHPPQHAQ). Residues 34 to 285 (YRLEKTLGKG…LEQIQKHPWY (252 aa)) enclose the Protein kinase domain. ATP is bound by residues 40-48 (LGKGQTGLV) and Lys-63. Catalysis depends on Asp-156, which acts as the Proton acceptor. The residue at position 189 (Thr-189) is a Phosphothreonine; by LKB1. The region spanning 314-356 (ELDPDVLESMASLGCFRDRERLHRELRSEEENQEKMIYYLLLD) is the UBA domain. A compositionally biased stretch (basic and acidic residues) spans 362-383 (PSCEDQDLPPRNDVDPPRKRVD). The interval 362 to 548 (PSCEDQDLPP…SPGGGVGGAA (187 aa)) is disordered. Phosphoserine is present on residues Ser-399, Ser-443, Ser-447, and Ser-450. Over residues 430 to 457 (SRSVSGASTGLSSSPLSSPRSPVFSFSP) the composition is skewed to low complexity. 4 positions are modified to omega-N-methylarginine: Arg-466, Arg-481, Arg-484, and Arg-498. A compositionally biased stretch (pro residues) spans 491 to 508 (QPPPPSARSTPLPGPPGS). Phosphoserine is present on Ser-508. Low complexity predominate over residues 509 to 533 (PRSSGGTPLHSPLHTPRASPTGTPG). Residue Arg-525 is modified to Omega-N-methylarginine. Thr-529 and Thr-535 each carry phosphothreonine. Arg-550 bears the Omega-N-methylarginine mark. Thr-583 is subject to Phosphothreonine. Residues Ser-586, Ser-587, and Ser-601 each carry the phosphoserine modification. Positions 719–778 (QPSVQALADEKNGAQTRPAGAPPRSLQPPPGRPDPELSSSPRRGPPKDKKLLATNGTPLP) are disordered.

This sequence belongs to the protein kinase superfamily. CAMK Ser/Thr protein kinase family. SNF1 subfamily. Requires Mg(2+) as cofactor. Post-translationally, phosphorylated at Thr-189 by STK11/LKB1 in complex with STE20-related adapter-alpha (STRADA) pseudo kinase and CAB39. Not phosphorylated at Thr-189 by CaMKK2. In contrast, it is phosphorylated and activated by CaMKK1. May be inactivated via dephosphorylation of Thr-189 by PP2C. In terms of tissue distribution, widely expressed, with highest levels in brain and testis. Protein levels remain constant throughout the cell cycle.

The protein resides in the cytoplasm. Its subcellular location is the nucleus. It localises to the cytoskeleton. It is found in the microtubule organizing center. The protein localises to the centrosome. The protein resides in the synapse. Its subcellular location is the presynaptic active zone. It localises to the cytoplasmic vesicle. It is found in the secretory vesicle. The protein localises to the synaptic vesicle. It carries out the reaction L-seryl-[protein] + ATP = O-phospho-L-seryl-[protein] + ADP + H(+). It catalyses the reaction L-threonyl-[protein] + ATP = O-phospho-L-threonyl-[protein] + ADP + H(+). The enzyme catalyses L-seryl-[tau protein] + ATP = O-phospho-L-seryl-[tau protein] + ADP + H(+). The catalysed reaction is L-threonyl-[tau protein] + ATP = O-phospho-L-threonyl-[tau protein] + ADP + H(+). Its activity is regulated as follows. Activated by phosphorylation on Thr-189 by STK11/LKB1. Its function is as follows. Serine/threonine-protein kinase that plays a key role in polarization of neurons and centrosome duplication. Phosphorylates CDC25B, CDC25C, MAPT/TAU, RIMS1, TUBG1, TUBG2 and WEE1. Following phosphorylation and activation by STK11/LKB1, acts as a key regulator of polarization of cortical neurons, probably by mediating phosphorylation of microtubule-associated proteins such as MAPT/TAU at 'Thr-529' and 'Ser-579'. Also regulates neuron polarization by mediating phosphorylation of WEE1 at 'Ser-642' in postmitotic neurons, leading to down-regulate WEE1 activity in polarized neurons. In neurons, localizes to synaptic vesicles and plays a role in neurotransmitter release, possibly by phosphorylating RIMS1. Also acts as a positive regulator of centrosome duplication by mediating phosphorylation of gamma-tubulin (TUBG1 and TUBG2) at 'Ser-131', leading to translocation of gamma-tubulin and its associated proteins to the centrosome. Involved in the UV-induced DNA damage checkpoint response, probably by inhibiting CDK1 activity through phosphorylation and activation of WEE1, and inhibition of CDC25B and CDC25C. This chain is Serine/threonine-protein kinase BRSK1 (BRSK1), found in Homo sapiens (Human).